Reading from the N-terminus, the 310-residue chain is MARRKKGDAISGWICLDKPYDLTSTSAVSRVRRAFNAQKAGHAGTLDPLATGVLPLALGEATKTVPFLMDADKAYRFTIAWGRSTTTLDREGETTDSSDVRPTREQVEAVLAPFIGEIDQIPPNYSAIKVDGERAYDLAREGVEFELKTRKVKVHALRVTAAPDVDHLELEMECGKGTYVRAIVRDLAAALGACGHVDQLRRTRVGRFTEQTAIGLETLENLSYEARLSEALLPVETALDDIPALAVTDEDAFRLAQGRAIVLLPRQVESLKAVLTPGDRTVSAMSGQRLVALCEMRAGSLNPVRVFQLT.

D47 acts as the Nucleophile in catalysis.

This sequence belongs to the pseudouridine synthase TruB family. Type 1 subfamily.

The enzyme catalyses uridine(55) in tRNA = pseudouridine(55) in tRNA. Its function is as follows. Responsible for synthesis of pseudouridine from uracil-55 in the psi GC loop of transfer RNAs. The chain is tRNA pseudouridine synthase B from Caulobacter sp. (strain K31).